Consider the following 301-residue polypeptide: MARTDGDTWDLASSVGATATSVAASRAFASRGPDALIDDPYARLLVEAVGLPHFVKVARGEIDFDGDPLFGAQQAINQIVVRTRIFDDFLTDAGQREPQIRQAVILASGLDTRAYRLDWPAGTVVYEIDQPEVIDFKTAVLTDAGVAPAADRRTVGIDLREDWPTALRDAGFDPDRPTAWIAEGLLPYLPPDAQDRLLDSITALSAPGSRLATEHMDAKALTGDWAKAMTERARRHGSDIDLTKLFYNGERRSATEHLGAVGWQTSVQTSNDAYIANGFGPIRDDLLAMIGDSGYLTAWRP.

Residues aspartate 129 and 158-159 contribute to the S-adenosyl-L-methionine site; that span reads DL.

It belongs to the UPF0677 family.

In terms of biological role, exhibits S-adenosyl-L-methionine-dependent methyltransferase activity. This is Putative S-adenosyl-L-methionine-dependent methyltransferase Mflv_5024 from Mycolicibacterium gilvum (strain PYR-GCK) (Mycobacterium gilvum (strain PYR-GCK)).